Reading from the N-terminus, the 220-residue chain is Small ribosomal subunit protein eS1 (220 aa).

It belongs to the eukaryotic ribosomal protein eS1 family.

The chain is Small ribosomal subunit protein eS1 from Pyrobaculum arsenaticum (strain DSM 13514 / JCM 11321 / PZ6).